A 474-amino-acid polypeptide reads, in one-letter code: Uronate isomerase (474 aa).

Belongs to the metallo-dependent hydrolases superfamily. Uronate isomerase family.

The enzyme catalyses D-glucuronate = D-fructuronate. It catalyses the reaction aldehydo-D-galacturonate = keto-D-tagaturonate. Its pathway is carbohydrate metabolism; pentose and glucuronate interconversion. The protein is Uronate isomerase of Photorhabdus laumondii subsp. laumondii (strain DSM 15139 / CIP 105565 / TT01) (Photorhabdus luminescens subsp. laumondii).